Here is a 472-residue protein sequence, read N- to C-terminus: tRNA(Ile)-lysidine synthase (472 aa).

25–30 contacts ATP; the sequence is SGGPDS.

It belongs to the tRNA(Ile)-lysidine synthase family.

The protein resides in the cytoplasm. The enzyme catalyses cytidine(34) in tRNA(Ile2) + L-lysine + ATP = lysidine(34) in tRNA(Ile2) + AMP + diphosphate + H(+). Its function is as follows. Ligates lysine onto the cytidine present at position 34 of the AUA codon-specific tRNA(Ile) that contains the anticodon CAU, in an ATP-dependent manner. Cytidine is converted to lysidine, thus changing the amino acid specificity of the tRNA from methionine to isoleucine. The polypeptide is tRNA(Ile)-lysidine synthase (tilS) (Bacillus subtilis (strain 168)).